A 276-amino-acid polypeptide reads, in one-letter code: UPF0276 protein CV_3513 (276 aa).

It belongs to the UPF0276 family.

This chain is UPF0276 protein CV_3513, found in Chromobacterium violaceum (strain ATCC 12472 / DSM 30191 / JCM 1249 / CCUG 213 / NBRC 12614 / NCIMB 9131 / NCTC 9757 / MK).